We begin with the raw amino-acid sequence, 478 residues long: ATP synthase subunit beta (478 aa).

ATP is bound at residue glycine 163–threonine 170.

The protein belongs to the ATPase alpha/beta chains family. As to quaternary structure, F-type ATPases have 2 components, CF(1) - the catalytic core - and CF(0) - the membrane proton channel. CF(1) has five subunits: alpha(3), beta(3), gamma(1), delta(1), epsilon(1). CF(0) has three main subunits: a(1), b(2) and c(9-12). The alpha and beta chains form an alternating ring which encloses part of the gamma chain. CF(1) is attached to CF(0) by a central stalk formed by the gamma and epsilon chains, while a peripheral stalk is formed by the delta and b chains.

Its subcellular location is the cell inner membrane. The catalysed reaction is ATP + H2O + 4 H(+)(in) = ADP + phosphate + 5 H(+)(out). Produces ATP from ADP in the presence of a proton gradient across the membrane. The catalytic sites are hosted primarily by the beta subunits. The polypeptide is ATP synthase subunit beta (Aquifex pyrophilus).